Here is a 238-residue protein sequence, read N- to C-terminus: Lactate utilization protein A (238 aa).

The protein belongs to the LutA/YkgE family.

Is involved in L-lactate degradation and allows cells to grow with lactate as the sole carbon source. The polypeptide is Lactate utilization protein A (Anoxybacillus flavithermus (strain DSM 21510 / WK1)).